A 327-amino-acid chain; its full sequence is L-lactate dehydrogenase (327 aa).

NAD(+)-binding positions include V18, D39, R44, Y69, and 83–84; that span reads GL. Substrate-binding positions include Q86, R92, and 124–127; that span reads NPVD. Residues 122-124 and S147 each bind NAD(+); that span reads AAN. Residue 152–155 coordinates substrate; that stretch reads DSAR. The beta-D-fructose 1,6-bisphosphate site is built by R157 and H172. H179 functions as the Proton acceptor in the catalytic mechanism. Y224 carries the phosphotyrosine modification. Substrate is bound at residue T233.

The protein belongs to the LDH/MDH superfamily. LDH family. Homotetramer.

Its subcellular location is the cytoplasm. The catalysed reaction is (S)-lactate + NAD(+) = pyruvate + NADH + H(+). Its pathway is fermentation; pyruvate fermentation to lactate; (S)-lactate from pyruvate: step 1/1. Its activity is regulated as follows. Allosterically activated by fructose 1,6-bisphosphate (FBP). Catalyzes the conversion of lactate to pyruvate. This chain is L-lactate dehydrogenase, found in Streptococcus suis (strain 98HAH33).